The chain runs to 185 residues: Monooxygenase hypC (185 aa).

3 helical membrane-spanning segments follow: residues 35-55 (TGTFLSGAMMSLFLLTIPVIL), 75-95 (GHIQGPLISIATGLLYSYAAY), and 106-126 (PFAVSAAVTVAMIPFTWVFMA). An N-linked (GlcNAc...) asparagine glycan is attached at asparagine 129. The chain crosses the membrane as a helical span at residues 165-185 (ALFPLSGAVLGLLSTCKIVSF).

This sequence belongs to the anthrone oxygenase family.

Its subcellular location is the membrane. Its pathway is mycotoxin biosynthesis. Functionally, monooxygenase; part of the fragmented gene cluster that mediates the biosynthesis of dothistromin (DOTH), a polyketide toxin very similar in structure to the aflatoxin precursor, versicolorin B. The first step of the pathway is the conversion of acetate to norsolorinic acid (NOR) and requires the fatty acid synthase subunits hexA and hexB, as well as the polyketide synthase pksA. PksA combines a hexanoyl starter unit and 7 malonyl-CoA extender units to synthesize the precursor NOR. The hexanoyl starter unit is provided to the acyl-carrier protein (ACP) domain by the fungal fatty acid synthase hexA/hexB. The second step is the conversion of NOR to averantin (AVN) and requires the norsolorinic acid ketoreductase nor1, which catalyzes the dehydration of norsolorinic acid to form (1'S)-averantin. The cytochrome P450 monooxygenase avnA then catalyzes the hydroxylation of AVN to 5'hydroxyaverantin (HAVN). The next step is performed by adhA that transforms HAVN to averufin (AVF). Averufin might then be converted to hydroxyversicolorone by cypX and avfA. Hydroxyversicolorone is further converted versiconal hemiacetal acetate (VHA) by moxY. VHA is then the substrate for the versiconal hemiacetal acetate esterase est1 to yield versiconal (VAL). Versicolorin B synthase vbsA then converts VAL to versicolorin B (VERB) by closing the bisfuran ring. Then, the activity of the versicolorin B desaturase verB leads to versicolorin A (VERA). DotB, a predicted chloroperoxidase, may perform epoxidation of the A-ring of VERA. Alternatively, a cytochrome P450, such as cypX or avnA could catalyze this step. It is also possible that another, uncharacterized, cytochrome P450 enzyme is responsible for this step. Opening of the epoxide could potentially be achieved by the epoxide hydrolase epoA. However, epoA seems not to be required for DOTH biosynthesis, but other epoxide hydrolases may have the ability to complement this hydrolysis. Alternatively, opening of the epoxide ring could be achieved non-enzymatically. The next step is the deoxygenation of ring A to yield the 5,8-dihydroxyanthraquinone which is most likely catalyzed by the NADPH dehydrogenase encoded by ver1. The last stages of DOTH biosynthesis are proposed to involve hydroxylation of the bisfuran. OrdB and norB might have oxidative roles here. An alternative possibility is that cytochrome P450 monoogenases such as avnA and cypX might perform these steps in addition to previously proposed steps. The sequence is that of Monooxygenase hypC from Dothistroma septosporum (strain NZE10 / CBS 128990) (Red band needle blight fungus).